Reading from the N-terminus, the 241-residue chain is Methylosome subunit pICln (241 aa).

The interval 88 to 112 is disordered; sequence EDKEAHMADQEEEESEDDDDDEEPI. A compositionally biased stretch (acidic residues) spans 97–112; that stretch reads QEEEESEDDDDDEEPI.

This sequence belongs to the pICln (TC 1.A.47) family. As to quaternary structure, component of the methylosome, a 20S complex containing at least clns1a/picln, prmt5/skb1 and wdr77/mep50; may mediate snrpd1 and snrpd3 methylation. Forms a 6S pICln-Sm complex composed of clns1a/picln, snrpd1, snrpd2, snrpe, snrpf and snrpg; ring-like structure where clns1a/pICln mimics additional Sm proteins and which is unable to assemble into the core snRNP.

It is found in the cytoplasm. It localises to the cytosol. Its subcellular location is the nucleus. The protein localises to the cytoskeleton. In terms of biological role, involved in both the assembly of spliceosomal snRNPs and the methylation of Sm proteins. Chaperone that regulates the assembly of spliceosomal U1, U2, U4 and U5 small nuclear ribonucleoproteins (snRNPs), the building blocks of the spliceosome, and thereby plays an important role in the splicing of cellular pre-mRNAs. Most spliceosomal snRNPs contain a common set of Sm proteins SNRPB, SNRPD1, SNRPD2, SNRPD3, SNRPE, SNRPF and SNRPG that assemble in a heptameric protein ring on the Sm site of the small nuclear RNA to form the core snRNP (Sm core). In the cytosol, the Sm proteins SNRPD1, SNRPD2, SNRPE, SNRPF and SNRPG are trapped in an inactive 6S pICln-Sm complex by the chaperone CLNS1A that controls the assembly of the core snRNP. Dissociation by the SMN complex of CLNS1A from the trapped Sm proteins and their transfer to an SMN-Sm complex triggers the assembly of core snRNPs and their transport to the nucleus. In Xenopus laevis (African clawed frog), this protein is Methylosome subunit pICln (clns1a).